Consider the following 171-residue polypeptide: Peptide deformylase (171 aa).

Cys87 and His129 together coordinate Fe cation. The active site involves Glu130. His133 contributes to the Fe cation binding site.

This sequence belongs to the polypeptide deformylase family. Fe(2+) serves as cofactor.

The enzyme catalyses N-terminal N-formyl-L-methionyl-[peptide] + H2O = N-terminal L-methionyl-[peptide] + formate. Removes the formyl group from the N-terminal Met of newly synthesized proteins. Requires at least a dipeptide for an efficient rate of reaction. N-terminal L-methionine is a prerequisite for activity but the enzyme has broad specificity at other positions. This Pseudothermotoga lettingae (strain ATCC BAA-301 / DSM 14385 / NBRC 107922 / TMO) (Thermotoga lettingae) protein is Peptide deformylase.